We begin with the raw amino-acid sequence, 953 residues long: Atromentin synthetase invA5 (953 aa).

The interval 37–460 is adenylation (A) domain; it reads SRAVSQYPDH…SGRIKDTVIV (424 aa). The 79-residue stretch at 592 to 670 folds into the Carrier domain; the sequence is APSTETEKTL…SLAKYVDSLI (79 aa). The segment at 597-667 is thiolation and peptide carrier (T) domain; sequence TEKTLAGIYA…VISSLAKYVD (71 aa). O-(pantetheine 4'-phosphoryl)serine is present on Ser-629. The thioesterase (TE) domain stretch occupies residues 693 to 795; the sequence is PIFMVHPGVG…FTGLINIPPN (103 aa).

It belongs to the ATP-dependent AMP-binding enzyme family.

The protein operates within secondary metabolite biosynthesis. Functionally, an L-tyrosine:2-oxoglutarate aminotransferase (probably invD) and atromentin synthetase invA5 catalyze consecutive steps to turn over L-tyrosine into atromentin, which represents the generic precursor molecule for the entire terphenylquinone and pulvinic acid family of pigments, which are widely distributed secondary metabolites in homobasidiomycetes. The first step catalyzed by the aminotransferase converts L-tyrosine in to 4-hydroxyphenylpyruvate (4-HPP). Adenylation of two 4-HPP monomers by the invA5 adenylation (A) domain, covalent tethering of the monomers as a thioester and oxoester onto the invA5 thiolation (T) and thioesterase (TE) domains, respectively, and symmetric C-C-bond formation between two monomers catalyzed by the invA5 TE domain leads to atromentin. This is Atromentin synthetase invA5 (invA5) from Paxillus involutus (Naked brimcap).